Reading from the N-terminus, the 403-residue chain is RILP-like protein 1 (403 aa).

S7 bears the Phosphoserine mark. Residues 10–97 (AAESALEKNV…RLERMDRIEK (88 aa)) form the RH1 domain. Position 47 is an S-nitrosocysteine (C47). Residues 76 to 258 (ELDELRLELD…KLRERLQGEH (183 aa)) are a coiled coil. Disordered stretches follow at residues 254-275 (LQGE…GEES), 327-352 (EMEE…PESG), and 384-403 (ANTH…LQHL). At S259 the chain carries Phosphoserine. Residues 262–275 (GEEEPETEPVGEES) show a composition bias toward acidic residues. The region spanning 291 to 356 (RPRFTLQELR…PQPESGIKRL (66 aa)) is the RH2 domain. Over residues 394–403 (EQGQEALQHL) the composition is skewed to polar residues.

It belongs to the RILPL family. In terms of assembly, interacts (when S-nitrosylated) with GAPDH. Interacts with RAB8A; interaction is dependent on the phosphorylation of 'Thr-72' of RAB8A. Interacts with RAB10 and RAB12; the interaction is dependent on the phosphorylation of 'Thr-73' of RAB10, and 'Ser-105' of RAB12. In terms of processing, S-nitrosylation is required for the interaction with GAPDH. In terms of tissue distribution, widely expressed. Expressed at lower level in liver and kidney.

It is found in the cytoplasm. It localises to the cytosol. The protein resides in the cytoskeleton. The protein localises to the microtubule organizing center. Its subcellular location is the centrosome. It is found in the centriole. It localises to the cilium basal body. Functionally, plays a role in the regulation of cell shape and polarity. Plays a role in cellular protein transport, including protein transport away from primary cilia. Neuroprotective protein, which acts by sequestring GAPDH in the cytosol and prevent the apoptotic function of GAPDH in the nucleus. Competes with SIAH1 for binding GAPDH. Does not regulate lysosomal morphology and distribution. Binds to RAB10 following LRRK2-mediated RAB10 phosphorylation which leads to inhibition of ciliogenesis. This Homo sapiens (Human) protein is RILP-like protein 1 (RILPL1).